The sequence spans 544 residues: Chaperonin GroEL (544 aa).

Residues 30–33 (TLGP), Lys-51, 87–91 (DGTTT), Gly-415, and Asp-495 contribute to the ATP site.

This sequence belongs to the chaperonin (HSP60) family. Forms a cylinder of 14 subunits composed of two heptameric rings stacked back-to-back. Interacts with the co-chaperonin GroES.

Its subcellular location is the cytoplasm. It carries out the reaction ATP + H2O + a folded polypeptide = ADP + phosphate + an unfolded polypeptide.. In terms of biological role, together with its co-chaperonin GroES, plays an essential role in assisting protein folding. The GroEL-GroES system forms a nano-cage that allows encapsulation of the non-native substrate proteins and provides a physical environment optimized to promote and accelerate protein folding. This Neisseria meningitidis serogroup A / serotype 4A (strain DSM 15465 / Z2491) protein is Chaperonin GroEL.